Consider the following 297-residue polypeptide: RNA polymerase sigma-F factor (297 aa).

Positions 1-46 are disordered; the sequence is MTVPASTAPQVPPQQDPQVPHPQEPREEPHEEPPSPPAAPRPQSRG. The segment covering 10 to 22 has biased composition (pro residues); that stretch reads QVPPQQDPQVPHP. Positions 23–33 are enriched in basic and acidic residues; the sequence is QEPREEPHEEP. Residues 101 to 114 carry the Polymerase core binding motif; it reads DVVQVGTIGLINAI. The segment at residues 264–283 is a DNA-binding region (H-T-H motif); sequence QSQISAELGVSQMHVSRLLA.

The protein belongs to the sigma-70 factor family. SigB subfamily.

Its function is as follows. Sigma factors are initiation factors that promote the attachment of RNA polymerase to specific initiation sites and are then released. This sigma factor is required for normal spore maturation. This chain is RNA polymerase sigma-F factor (sigF), found in Kitasatospora aureofaciens (Streptomyces aureofaciens).